The chain runs to 424 residues: Gamma-glutamyl phosphate reductase (424 aa).

This sequence belongs to the gamma-glutamyl phosphate reductase family.

The protein localises to the cytoplasm. The enzyme catalyses L-glutamate 5-semialdehyde + phosphate + NADP(+) = L-glutamyl 5-phosphate + NADPH + H(+). Its pathway is amino-acid biosynthesis; L-proline biosynthesis; L-glutamate 5-semialdehyde from L-glutamate: step 2/2. Its function is as follows. Catalyzes the NADPH-dependent reduction of L-glutamate 5-phosphate into L-glutamate 5-semialdehyde and phosphate. The product spontaneously undergoes cyclization to form 1-pyrroline-5-carboxylate. This is Gamma-glutamyl phosphate reductase from Parvibaculum lavamentivorans (strain DS-1 / DSM 13023 / NCIMB 13966).